Here is a 690-residue protein sequence, read N- to C-terminus: DNA ligase (690 aa).

Residues 49-53, 98-99, and glutamate 129 contribute to the NAD(+) site; these read DAEYD and SL. The active-site N6-AMP-lysine intermediate is the lysine 131. Residues arginine 152, glutamate 191, lysine 308, and lysine 332 each coordinate NAD(+). Residues cysteine 426, cysteine 429, cysteine 444, and cysteine 450 each coordinate Zn(2+). The BRCT domain maps to 607-690; that stretch reads EDAARLEGLT…ALLREQGIDA (84 aa).

It belongs to the NAD-dependent DNA ligase family. LigA subfamily. Mg(2+) serves as cofactor. The cofactor is Mn(2+).

The catalysed reaction is NAD(+) + (deoxyribonucleotide)n-3'-hydroxyl + 5'-phospho-(deoxyribonucleotide)m = (deoxyribonucleotide)n+m + AMP + beta-nicotinamide D-nucleotide.. In terms of biological role, DNA ligase that catalyzes the formation of phosphodiester linkages between 5'-phosphoryl and 3'-hydroxyl groups in double-stranded DNA using NAD as a coenzyme and as the energy source for the reaction. It is essential for DNA replication and repair of damaged DNA. The chain is DNA ligase from Salinibacter ruber (strain DSM 13855 / M31).